Reading from the N-terminus, the 343-residue chain is Ferredoxin--NADP reductase (343 aa).

C18, D37, Q45, Y50, V90, F125, D290, and T331 together coordinate FAD.

The protein belongs to the ferredoxin--NADP reductase type 2 family. Homodimer. FAD serves as cofactor.

The catalysed reaction is 2 reduced [2Fe-2S]-[ferredoxin] + NADP(+) + H(+) = 2 oxidized [2Fe-2S]-[ferredoxin] + NADPH. The sequence is that of Ferredoxin--NADP reductase from Parvibaculum lavamentivorans (strain DS-1 / DSM 13023 / NCIMB 13966).